We begin with the raw amino-acid sequence, 366 residues long: Ribosomal RNA large subunit methyltransferase M (366 aa).

S-adenosyl-L-methionine-binding positions include Ser188, 221–224 (CPGG), Asp240, Asp260, and Asp277. Lys306 acts as the Proton acceptor in catalysis.

Belongs to the class I-like SAM-binding methyltransferase superfamily. RNA methyltransferase RlmE family. RlmM subfamily. As to quaternary structure, monomer.

Its subcellular location is the cytoplasm. The enzyme catalyses cytidine(2498) in 23S rRNA + S-adenosyl-L-methionine = 2'-O-methylcytidine(2498) in 23S rRNA + S-adenosyl-L-homocysteine + H(+). In terms of biological role, catalyzes the 2'-O-methylation at nucleotide C2498 in 23S rRNA. In Salmonella paratyphi C (strain RKS4594), this protein is Ribosomal RNA large subunit methyltransferase M.